We begin with the raw amino-acid sequence, 221 residues long: MEAGGVADSFLSSACVLFTLGMFSTGLSDLRHMQRTRSVDNIQFLPFLTTDVNNLSWLSYGVLKGDGTLIIVNSVGAVLQTLYILAYLHYSPQKHGVLLQTATLLAVLLLGYGYFWLLVPDLEARLQQLGLFCSVFTISMYLSPLADLAKIVQTKSTQRLSFSLTIATLFCSASWSIYGFRLRDPYITVPNLPGILTSLIRLGLFCKYPPEQDRKYRLLQT.

A run of 7 helical transmembrane segments spans residues 3-23 (AGGV…LGMF), 43-63 (QFLP…YGVL), 68-88 (TLII…LAYL), 102-122 (ATLL…VPDL), 129-149 (LGLF…ADLA), 160-180 (LSFS…IYGF), and 186-206 (YITV…GLFC). Residues 10–94 (FLSSACVLFT…LAYLHYSPQK (85 aa)) form the MtN3/slv 1 domain. The MtN3/slv 2 domain occupies 127 to 212 (QQLGLFCSVF…GLFCKYPPEQ (86 aa)). The segment at 149-221 (AKIVQTKSTQ…QDRKYRLLQT (73 aa)) is mediates interaction with TRPV2.

The protein belongs to the SWEET sugar transporter family. In terms of assembly, interacts with TRPV2; the interaction probably occurs intracellularly and depends on TRPV2 N-glycosylation. Expressed at high levels in lung, placenta, spleen and thymus, at intermediate levels in brain, heart, kidney and testis, and at low levels in bone marrow, liver and lymph node. Within the thymus expression is highest in non-lymphoid cells.

It is found in the golgi apparatus membrane. Its subcellular location is the cell membrane. Its function is as follows. Mediates sugar transport across membranes. May regulate the expression of RAG1 a gene involved in V(D)J recombination. This is Sugar transporter SWEET1 (Slc50a1) from Mus musculus (Mouse).